The following is a 316-amino-acid chain: Tyrosine recombinase XerC (316 aa).

The Core-binding (CB) domain maps to 11-97 (SGLRKPLDQF…SLRSFFDFLI (87 aa)). The Tyr recombinase domain occupies 118-298 (PLPKNLDVDE…DFQHLADVYD (181 aa)). Active-site residues include Arg-157, Lys-181, His-250, Arg-253, and His-276. The active-site O-(3'-phospho-DNA)-tyrosine intermediate is the Tyr-285.

It belongs to the 'phage' integrase family. XerC subfamily. Forms a cyclic heterotetrameric complex composed of two molecules of XerC and two molecules of XerD.

It localises to the cytoplasm. Site-specific tyrosine recombinase, which acts by catalyzing the cutting and rejoining of the recombining DNA molecules. The XerC-XerD complex is essential to convert dimers of the bacterial chromosome into monomers to permit their segregation at cell division. It also contributes to the segregational stability of plasmids. The protein is Tyrosine recombinase XerC of Vibrio vulnificus (strain CMCP6).